The following is a 492-amino-acid chain: DEAD-box ATP-dependent RNA helicase RhpA (492 aa).

Residues 20–48 carry the Q motif motif; sequence PSFNDLGLKESVLKSVYEAGFTSPSPIQE. Residues 51–220 enclose the Helicase ATP-binding domain; sequence IPAVLQGRDV…DKILENPIKI (170 aa). Residue 64–71 coordinates ATP; the sequence is AQTGTGKT. The short motif at 168–171 is the DEAD box element; that stretch reads DESD. Positions 231 to 393 constitute a Helicase C-terminal domain; it reads DITQRFYVIN…EIPTINENQI (163 aa). The segment at 445–492 is disordered; sequence AIQNPKEKTPKPSNKKTPQHERARSFKKGQHRDRHPKTNHYSKKPKRR. Residues 469-492 show a composition bias toward basic residues; the sequence is SFKKGQHRDRHPKTNHYSKKPKRR.

The protein belongs to the DEAD box helicase family. In terms of assembly, homodimer. Interacts with RNase J (rnj), might be a member of a minimal RNA degradosome complex.

It is found in the cytoplasm. The catalysed reaction is ATP + H2O = ADP + phosphate + H(+). Its function is as follows. DEAD-box RNA helicase probably involved in RNA degradation. Unwinds dsRNA in both 5'- and 3'-directions. The sequence is that of DEAD-box ATP-dependent RNA helicase RhpA (rhpA) from Helicobacter pylori (strain ATCC 700392 / 26695) (Campylobacter pylori).